A 344-amino-acid polypeptide reads, in one-letter code: Heme A synthase (344 aa).

9 consecutive transmembrane segments (helical) span residues 20 to 40 (IAWW…VGGL), 104 to 124 (RFLG…FVVT), 135 to 155 (LIFL…MVMS), 170 to 190 (AHLG…LDLL), 205 to 225 (AAAI…VAGI), 233 to 253 (TWPL…TPVW), 265 to 285 (FQHR…WWAA), 296 to 316 (WLAV…LWVV), and 317 to 337 (PIPL…VAVW). Histidine 267 contributes to the heme binding site. Histidine 324 contributes to the heme binding site.

Belongs to the COX15/CtaA family. Type 2 subfamily. In terms of assembly, interacts with CtaB. Heme b is required as a cofactor.

It localises to the cell membrane. The enzyme catalyses Fe(II)-heme o + 2 A + H2O = Fe(II)-heme a + 2 AH2. The protein operates within porphyrin-containing compound metabolism; heme A biosynthesis; heme A from heme O: step 1/1. Functionally, catalyzes the conversion of heme O to heme A by two successive hydroxylations of the methyl group at C8. The first hydroxylation forms heme I, the second hydroxylation results in an unstable dihydroxymethyl group, which spontaneously dehydrates, resulting in the formyl group of heme A. This is Heme A synthase from Parvibaculum lavamentivorans (strain DS-1 / DSM 13023 / NCIMB 13966).